Here is a 161-residue protein sequence, read N- to C-terminus: Crossover junction endodeoxyribonuclease RuvC (161 aa).

Active-site residues include D8, E67, and D139. The Mg(2+) site is built by D8, E67, and D139.

It belongs to the RuvC family. In terms of assembly, homodimer which binds Holliday junction (HJ) DNA. The HJ becomes 2-fold symmetrical on binding to RuvC with unstacked arms; it has a different conformation from HJ DNA in complex with RuvA. In the full resolvosome a probable DNA-RuvA(4)-RuvB(12)-RuvC(2) complex forms which resolves the HJ. Mg(2+) is required as a cofactor.

It localises to the cytoplasm. It catalyses the reaction Endonucleolytic cleavage at a junction such as a reciprocal single-stranded crossover between two homologous DNA duplexes (Holliday junction).. The RuvA-RuvB-RuvC complex processes Holliday junction (HJ) DNA during genetic recombination and DNA repair. Endonuclease that resolves HJ intermediates. Cleaves cruciform DNA by making single-stranded nicks across the HJ at symmetrical positions within the homologous arms, yielding a 5'-phosphate and a 3'-hydroxyl group; requires a central core of homology in the junction. The consensus cleavage sequence is 5'-(A/T)TT(C/G)-3'. Cleavage occurs on the 3'-side of the TT dinucleotide at the point of strand exchange. HJ branch migration catalyzed by RuvA-RuvB allows RuvC to scan DNA until it finds its consensus sequence, where it cleaves and resolves the cruciform DNA. The polypeptide is Crossover junction endodeoxyribonuclease RuvC (Wigglesworthia glossinidia brevipalpis).